A 284-amino-acid chain; its full sequence is Homoserine O-acetyltransferase 2 (284 aa).

The Acyl-thioester intermediate role is filled by Cys-133. The substrate site is built by Lys-154 and Ser-178. Residue His-220 is the Proton acceptor of the active site. Glu-222 is a catalytic residue. Arg-234 contributes to the substrate binding site.

It belongs to the MetA family.

It is found in the cytoplasm. It carries out the reaction L-homoserine + acetyl-CoA = O-acetyl-L-homoserine + CoA. It participates in amino-acid biosynthesis; L-methionine biosynthesis via de novo pathway; O-acetyl-L-homoserine from L-homoserine: step 1/1. In terms of biological role, transfers an acetyl group from acetyl-CoA to L-homoserine, forming acetyl-L-homoserine. The sequence is that of Homoserine O-acetyltransferase 2 from Ilyobacter polytropus (strain ATCC 51220 / DSM 2926 / LMG 16218 / CuHBu1).